Reading from the N-terminus, the 925-residue chain is Isoleucine--tRNA ligase (925 aa).

The 'HIGH' region motif lies at 57-67 (PYANGDIHMGH). An L-isoleucyl-5'-AMP-binding site is contributed by glutamate 556. The short motif at 597 to 601 (KMSKS) is the 'KMSKS' region element. Lysine 600 is an ATP binding site. Zn(2+) is bound by residues cysteine 890, cysteine 893, cysteine 910, and cysteine 913.

Belongs to the class-I aminoacyl-tRNA synthetase family. IleS type 1 subfamily. As to quaternary structure, monomer. Zn(2+) is required as a cofactor.

Its subcellular location is the cytoplasm. The catalysed reaction is tRNA(Ile) + L-isoleucine + ATP = L-isoleucyl-tRNA(Ile) + AMP + diphosphate. Functionally, catalyzes the attachment of isoleucine to tRNA(Ile). As IleRS can inadvertently accommodate and process structurally similar amino acids such as valine, to avoid such errors it has two additional distinct tRNA(Ile)-dependent editing activities. One activity is designated as 'pretransfer' editing and involves the hydrolysis of activated Val-AMP. The other activity is designated 'posttransfer' editing and involves deacylation of mischarged Val-tRNA(Ile). The chain is Isoleucine--tRNA ligase from Carboxydothermus hydrogenoformans (strain ATCC BAA-161 / DSM 6008 / Z-2901).